The following is a 328-amino-acid chain: Ribosomal RNA small subunit methyltransferase H (328 aa).

Residues 37–39, aspartate 57, phenylalanine 83, aspartate 104, and glutamine 111 each bind S-adenosyl-L-methionine; that span reads GGH.

It belongs to the methyltransferase superfamily. RsmH family.

The protein localises to the cytoplasm. It carries out the reaction cytidine(1402) in 16S rRNA + S-adenosyl-L-methionine = N(4)-methylcytidine(1402) in 16S rRNA + S-adenosyl-L-homocysteine + H(+). Functionally, specifically methylates the N4 position of cytidine in position 1402 (C1402) of 16S rRNA. The polypeptide is Ribosomal RNA small subunit methyltransferase H (Neisseria meningitidis serogroup B (strain ATCC BAA-335 / MC58)).